We begin with the raw amino-acid sequence, 326 residues long: Protein FAM50 homolog (326 aa).

Residues I77–H111 form a disordered region. The segment covering D97–A109 has biased composition (basic and acidic residues).

The protein belongs to the FAM50 family.

In Caenorhabditis elegans, this protein is Protein FAM50 homolog.